We begin with the raw amino-acid sequence, 473 residues long: ATP synthase subunit beta (473 aa).

An ATP-binding site is contributed by 158-165; that stretch reads GGAGVGKT.

It belongs to the ATPase alpha/beta chains family. F-type ATPases have 2 components, CF(1) - the catalytic core - and CF(0) - the membrane proton channel. CF(1) has five subunits: alpha(3), beta(3), gamma(1), delta(1), epsilon(1). CF(0) has three main subunits: a(1), b(2) and c(9-12). The alpha and beta chains form an alternating ring which encloses part of the gamma chain. CF(1) is attached to CF(0) by a central stalk formed by the gamma and epsilon chains, while a peripheral stalk is formed by the delta and b chains. The F(1)F(0) complex interacts with SpoIIIJ and YqjG; YqgA is found in the same complex.

It is found in the cell membrane. The protein resides in the membrane raft. It carries out the reaction ATP + H2O + 4 H(+)(in) = ADP + phosphate + 5 H(+)(out). Functionally, produces ATP from ADP in the presence of a proton gradient across the membrane. The catalytic sites are hosted primarily by the beta subunits. The chain is ATP synthase subunit beta from Bacillus subtilis (strain 168).